The primary structure comprises 250 residues: Replicating protein (250 aa).

Disordered regions lie at residues 1–23 and 168–250; these read MFQQIGAVQAKSGTDEPAHPCEK and KAHM…KAFE. Composition is skewed to basic and acidic residues over residues 13 to 23 and 178 to 190; these read GTDEPAHPCEK and DRLRETVEDRTRA. The segment covering 218 to 237 has biased composition (polar residues); it reads SRCSFTTPNRPRRTLPSSHP.

Functionally, required for replication. It likely regulates pTAR copy number. The sequence is that of Replicating protein (repA) from Rhizobium radiobacter (Agrobacterium tumefaciens).